The sequence spans 126 residues: Histone H2B type 1-K (126 aa).

A compositionally biased stretch (low complexity) spans 1–12 (MPEPAKSAPAPK). Residues 1 to 36 (MPEPAKSAPAPKKGSKKAVTKAQKKDGKKRKRSRKE) form a disordered region. At Pro-2 the chain carries N-acetylproline. Glu-3 carries the post-translational modification ADP-ribosyl glutamic acid. An N6-(2-hydroxyisobutyryl)lysine; alternate modification is found at Lys-6. Lys-6 carries the post-translational modification N6-(beta-hydroxybutyryl)lysine; alternate. Lys-6 bears the N6-acetyllysine; alternate mark. Lys-6 carries the post-translational modification N6-butyryllysine; alternate. Lys-6 is modified (N6-crotonyllysine; alternate). N6-lactoyllysine; alternate is present on Lys-6. Lys-6 participates in a covalent cross-link: Glycyl lysine isopeptide (Lys-Gly) (interchain with G-Cter in SUMO2); alternate. The residue at position 7 (Ser-7) is an ADP-ribosylserine. Lys-12 carries the N6-(beta-hydroxybutyryl)lysine; alternate modification. Residues Lys-12 and Lys-13 each carry the N6-acetyllysine; alternate modification. An N6-crotonyllysine; alternate mark is found at Lys-12 and Lys-13. Lys-12 is modified (N6-lactoyllysine; alternate). Position 13 is an N6-(2-hydroxyisobutyryl)lysine; alternate (Lys-13). Phosphoserine; by STK4/MST1 is present on Ser-15. 4 positions are modified to N6-acetyllysine; alternate: Lys-16, Lys-17, Lys-21, and Lys-24. N6-crotonyllysine; alternate is present on residues Lys-16, Lys-17, Lys-21, and Lys-24. An N6-lactoyllysine; alternate mark is found at Lys-16, Lys-17, Lys-21, and Lys-24. At Lys-17 the chain carries N6-glutaryllysine; alternate. N6-(2-hydroxyisobutyryl)lysine; alternate is present on residues Lys-21 and Lys-24. N6-(beta-hydroxybutyryl)lysine; alternate is present on Lys-21. Residue Lys-21 is modified to N6-butyryllysine; alternate. Residue Lys-21 forms a Glycyl lysine isopeptide (Lys-Gly) (interchain with G-Cter in SUMO2); alternate linkage. N6-(2-hydroxyisobutyryl)lysine is present on Lys-25. Residue Lys-35 is modified to N6-(2-hydroxyisobutyryl)lysine; alternate. Lys-35 carries the N6-(beta-hydroxybutyryl)lysine; alternate modification. N6-crotonyllysine; alternate is present on Lys-35. N6-glutaryllysine; alternate is present on Lys-35. Lys-35 carries the post-translational modification N6-succinyllysine; alternate. Lys-35 participates in a covalent cross-link: Glycyl lysine isopeptide (Lys-Gly) (interchain with G-Cter in ubiquitin); alternate. Glu-36 carries the post-translational modification PolyADP-ribosyl glutamic acid. The residue at position 37 (Ser-37) is a Phosphoserine; by AMPK. Residues Lys-44, Lys-47, and Lys-58 each carry the N6-(2-hydroxyisobutyryl)lysine; alternate modification. An N6-lactoyllysine; alternate modification is found at Lys-44. N6-glutaryllysine; alternate is present on residues Lys-44 and Lys-47. At Lys-47 the chain carries N6-methyllysine; alternate. Lys-58 bears the N6,N6-dimethyllysine; alternate mark. Dimethylated arginine is present on Arg-80. Lys-86 bears the N6-(2-hydroxyisobutyryl)lysine; alternate mark. At Lys-86 the chain carries N6-acetyllysine; alternate. Lys-86 bears the N6-lactoyllysine; alternate mark. An N6,N6,N6-trimethyllysine; alternate modification is found at Lys-86. Omega-N-methylarginine is present on residues Arg-87 and Arg-93. Residue Lys-109 is modified to N6-(2-hydroxyisobutyryl)lysine; alternate. Lys-109 carries the N6-lactoyllysine; alternate modification. An N6-glutaryllysine; alternate modification is found at Lys-109. Lys-109 bears the N6-methyllysine; alternate mark. Residue Ser-113 is glycosylated (O-linked (GlcNAc) serine). Position 116 is a phosphothreonine (Thr-116). Residues Lys-117 and Lys-121 each carry the N6-(2-hydroxyisobutyryl)lysine; alternate modification. Residue Lys-117 is modified to N6-(beta-hydroxybutyryl)lysine; alternate. Residues Lys-117 and Lys-121 each carry the N6-lactoyllysine; alternate modification. N6-glutaryllysine; alternate occurs at positions 117 and 121. An N6-succinyllysine; alternate mark is found at Lys-117 and Lys-121. The residue at position 117 (Lys-117) is an N6-methylated lysine; alternate. Residue Lys-121 forms a Glycyl lysine isopeptide (Lys-Gly) (interchain with G-Cter in ubiquitin); alternate linkage.

This sequence belongs to the histone H2B family. In terms of assembly, the nucleosome is a histone octamer containing two molecules each of H2A, H2B, H3 and H4 assembled in one H3-H4 heterotetramer and two H2A-H2B heterodimers. The octamer wraps approximately 147 bp of DNA. Post-translationally, monoubiquitination at Lys-35 (H2BK34Ub) by the MSL1/MSL2 dimer is required for histone H3 'Lys-4' (H3K4me) and 'Lys-79' (H3K79me) methylation and transcription activation at specific gene loci, such as HOXA9 and MEIS1 loci. Similarly, monoubiquitination at Lys-121 (H2BK120Ub) by the RNF20/40 complex gives a specific tag for epigenetic transcriptional activation and is also prerequisite for histone H3 'Lys-4' and 'Lys-79' methylation. It also functions cooperatively with the FACT dimer to stimulate elongation by RNA polymerase II. H2BK120Ub also acts as a regulator of mRNA splicing: deubiquitination by USP49 is required for efficient cotranscriptional splicing of a large set of exons. Phosphorylated on Ser-15 (H2BS14ph) by STK4/MST1 during apoptosis; which facilitates apoptotic chromatin condensation. Also phosphorylated on Ser-15 in response to DNA double strand breaks (DSBs), and in correlation with somatic hypermutation and immunoglobulin class-switch recombination. Phosphorylation at Ser-37 (H2BS36ph) by AMPK in response to stress promotes transcription. In terms of processing, glcNAcylation at Ser-113 promotes monoubiquitination of Lys-121. It fluctuates in response to extracellular glucose, and associates with transcribed genes. Post-translationally, ADP-ribosylated by PARP1 or PARP2 on Ser-7 (H2BS6ADPr) in response to DNA damage. H2BS6ADPr promotes recruitment of CHD1L. Mono-ADP-ribosylated on Glu-3 (H2BE2ADPr) by PARP3 in response to single-strand breaks. Poly ADP-ribosylation on Glu-36 (H2BE35ADPr) by PARP1 regulates adipogenesis: it inhibits phosphorylation at Ser-37 (H2BS36ph), thereby blocking expression of pro-adipogenetic genes. Crotonylation (Kcr) is specifically present in male germ cells and marks testis-specific genes in post-meiotic cells, including X-linked genes that escape sex chromosome inactivation in haploid cells. Crotonylation marks active promoters and enhancers and confers resistance to transcriptional repressors. It is also associated with post-meiotically activated genes on autosomes. In terms of processing, lactylated in macrophages by EP300/P300 by using lactoyl-CoA directly derived from endogenous or exogenous lactate, leading to stimulates gene transcription.

It is found in the nucleus. It localises to the chromosome. Functionally, core component of nucleosome. Nucleosomes wrap and compact DNA into chromatin, limiting DNA accessibility to the cellular machineries which require DNA as a template. Histones thereby play a central role in transcription regulation, DNA repair, DNA replication and chromosomal stability. DNA accessibility is regulated via a complex set of post-translational modifications of histones, also called histone code, and nucleosome remodeling. This Macaca fascicularis (Crab-eating macaque) protein is Histone H2B type 1-K.